The sequence spans 150 residues: Large ribosomal subunit protein bL9 (150 aa).

It belongs to the bacterial ribosomal protein bL9 family.

Binds to the 23S rRNA. The sequence is that of Large ribosomal subunit protein bL9 from Burkholderia thailandensis (strain ATCC 700388 / DSM 13276 / CCUG 48851 / CIP 106301 / E264).